The primary structure comprises 298 residues: Tyrosine recombinase XerC (298 aa).

The Core-binding (CB) domain maps to 1-85 (MKPIAAFQEY…SLRSFYRYLT (85 aa)). Residues 106–291 (HLPQFFYEAE…TMAHLKNEYM (186 aa)) enclose the Tyr recombinase domain. Active-site residues include arginine 146, lysine 170, histidine 243, arginine 246, and histidine 269. Tyrosine 278 serves as the catalytic O-(3'-phospho-DNA)-tyrosine intermediate.

It belongs to the 'phage' integrase family. XerC subfamily. Forms a cyclic heterotetrameric complex composed of two molecules of XerC and two molecules of XerD.

It localises to the cytoplasm. In terms of biological role, site-specific tyrosine recombinase, which acts by catalyzing the cutting and rejoining of the recombining DNA molecules. The XerC-XerD complex is essential to convert dimers of the bacterial chromosome into monomers to permit their segregation at cell division. It also contributes to the segregational stability of plasmids. This Lacticaseibacillus paracasei (strain ATCC 334 / BCRC 17002 / CCUG 31169 / CIP 107868 / KCTC 3260 / NRRL B-441) (Lactobacillus paracasei) protein is Tyrosine recombinase XerC.